We begin with the raw amino-acid sequence, 561 residues long: DNA mismatch repair protein MutL (561 aa).

This sequence belongs to the DNA mismatch repair MutL/HexB family.

This protein is involved in the repair of mismatches in DNA. It is required for dam-dependent methyl-directed DNA mismatch repair. May act as a 'molecular matchmaker', a protein that promotes the formation of a stable complex between two or more DNA-binding proteins in an ATP-dependent manner without itself being part of a final effector complex. The chain is DNA mismatch repair protein MutL from Rippkaea orientalis (strain PCC 8801 / RF-1) (Cyanothece sp. (strain PCC 8801)).